The primary structure comprises 666 residues: Peptidase S41 family protein phomP1 (666 aa).

The first 27 residues, 1–27, serve as a signal peptide directing secretion; sequence MSSFLVQTAVVRLFLLGVVFWFPFALS. N-linked (GlcNAc...) asparagine glycosylation is found at asparagine 70, asparagine 214, and asparagine 234. Positions 303–504 are peptidase S41 domain; it reads DVAVLQITSF…LLQAQGVRTV (202 aa). 2 N-linked (GlcNAc...) asparagine glycosylation sites follow: asparagine 555 and asparagine 612.

Belongs to the peptidase S41A family.

It participates in mycotoxin biosynthesis. In terms of biological role, peptidase S41 family protein; part of the gene cluster that mediates the biosynthesis of the phomopsins, a group of hexapeptide mycotoxins which infects lupins and causes lupinosis disease in livestock. Within the pathway, phomP1 and phomP1' are probably involved in the processing of the phomA and phomA' precursors. The pathway starts with the processing of the precursor phomA by several endopeptidases including kexin proteases as well as the cluster-specific S41 family peptidase phomP1 and the oligopeptidase phomG to produce 10 identical copies of the hexapeptide Tyr-Val-Ile-Pro-Ile-Asp. After being excised from the precursor peptide, the core peptides are cyclized and modified post-translationally by enzymes encoded within the gene cluster. The timing and order of proteolysis of the phomA precursor and PTMs are still unknown. Two tyrosinase-like enzymes, phomQ1 and phomQ2, catalyze the chlorination and hydroxylation of Tyr, respectively. PhomYb, is proposed to be involved in the construction of the macrocyclic structure. The other 4 ustYa family proteins may be involved in PTMs that generate the unique structure of phomopsin A. PhomYa is required for the hydroxylation of C-beta of Tyr. PhomYc, phomYd, and phomYe are responsible for the biosynthesis of 2,3-dehydroisoleucine (dIle), 2,3-dehydroaspartic acid (dAsp), and 3,4-dehydroproline (dPro), respectively. While dIle formation by phomYc is indispensable for the installation of dAsp by phomYd, the order of the other PTMs have not been elucidated yet. Most of the biosynthetic enzymes likely have broad substrate specificity, and thus, there might be a metabolic grid from a precursor to phomopsin A. The enzyme(s) responsible for the biosynthesis of 3,4-dehydrovaline (dVal) have also not been identified yet. Finally, phomM acts as an S-adenosylmethionine-dependent alpha-N-methyltransferase that catalyzes two successive N-methylation reactions, converting N-desmethyl-phomopsin A to phomopsin A and phomopsin A further to an N,N-dimethylated congener called phomopsin E. In Diaporthe leptostromiformis (Lupinosis disease fungus), this protein is Peptidase S41 family protein phomP1.